A 119-amino-acid chain; its full sequence is Large ribosomal subunit protein bL20 (119 aa).

The protein belongs to the bacterial ribosomal protein bL20 family.

Binds directly to 23S ribosomal RNA and is necessary for the in vitro assembly process of the 50S ribosomal subunit. It is not involved in the protein synthesizing functions of that subunit. The chain is Large ribosomal subunit protein bL20 from Gluconacetobacter diazotrophicus (strain ATCC 49037 / DSM 5601 / CCUG 37298 / CIP 103539 / LMG 7603 / PAl5).